The primary structure comprises 738 residues: Polyribonucleotide nucleotidyltransferase (738 aa).

Mg(2+) contacts are provided by Asp-514 and Asp-520. The 60-residue stretch at 580-639 (PRIITVKIPVDKIGEVIGPKGKMINQIQEDTGAEITIEDDGTIYIGAQVGSQAEAARATI) folds into the KH domain. Residues 651-723 (GERYLGTVVK…SRGKLSLIPV (73 aa)) form the S1 motif domain.

The protein belongs to the polyribonucleotide nucleotidyltransferase family. Mg(2+) serves as cofactor.

The protein resides in the cytoplasm. The catalysed reaction is RNA(n+1) + phosphate = RNA(n) + a ribonucleoside 5'-diphosphate. In terms of biological role, involved in mRNA degradation. Catalyzes the phosphorolysis of single-stranded polyribonucleotides processively in the 3'- to 5'-direction. This chain is Polyribonucleotide nucleotidyltransferase, found in Streptomyces avermitilis (strain ATCC 31267 / DSM 46492 / JCM 5070 / NBRC 14893 / NCIMB 12804 / NRRL 8165 / MA-4680).